The chain runs to 35 residues: Thrombin-like enzyme cerastobin (35 aa).

One can recognise a Peptidase S1 domain in the interval 1-35; it reads VIGGAKCNINEHRSIVLLYSSRLFGHTLINKEWVL.

This sequence belongs to the peptidase S1 family. Snake venom subfamily. In terms of assembly, monomer. Expressed by the venom gland.

It is found in the secreted. With respect to regulation, inhibited by diisopropylfluorophosphate (DFP). In terms of biological role, thrombin-like snake venom serine protease, that cleaves both alpha-chain (FGA) and beta-chain (FGB) of fibrinogen. Partially degrades factor X (F10), and release bradykinin from kininogen (KNG). Potently induces platelet aggregation. Shows a proteolytic activity towards protein constituents of the platelets cytoskeleton. Hydrolyzes actin, actin-binding protein, and P235. Shows a preferential cleavage at Arg-|-Xaa bonds. In Cerastes vipera (Sahara sand viper), this protein is Thrombin-like enzyme cerastobin.